The sequence spans 980 residues: MALAVLRVLDPFPAETPPLAVLLPPGGPWPATGLGLVLALRPASESPAGPALLVAALEGPGSQNGQRGPGPPQLLVSRALLRLLALGPGARVRARPVRRPPALGWALLGSAPGPGPGPRVGPLLVRRGESLPVPGSRVLETRPALQGLLGPGTRLAVTELRGRAKLGPESTQHSRLPPPPVASSFAVSHAVRQLKGVLGGTGDALGVTRSCLRGLGLFQGEWVWVARVGEFPNTSQPHLAKVQLLEPRWDLSERLGPSSGQLGEPLADGLVFVPATLAFNLGCDPLEVGELRIQRYLEGSIIPEDRGSCSLMSGPPFARELHIEIVSSPHYSANGDYDHVLYRHFHTPRVVQEGDVLCVPTVGQVEILEGSPEKLPRWREVFFKVKKAVGEAPDGPASAFLADTTHTSLYMAGSALSRVPLLPSGRSTPWDSLSPPGLEALVNELCAILKPHLQPGGTLLTGTSCVLLQGPPGSGKTTAVTAACSRLGLHLLKVPCYSLCADSSGAVETKLQAAFSRARRCRPAVLLLTAIDLLGRDRDGLDEDARVVATLRHLLLDEDPVSNCPPLMVVATTSRAQDLPTDVHTAFPHELEVPVLSEEQRLSVLQALTAHLPLGQEVNLLQLARRCAGFVVGDLYALLTHTSRVACARIRASGLAGGLSEEDEGELCAAGFPLLAEDFGQALDQLQTAHSQAVGAPKIPSVSWHDVGGLQDVKKEILETIQLPLEHPELLSLGLRRSGLLLHGPPGTGKTLLAKAVATECSLTFLSVKGPELINMYVGQSEENVREVFARARAAAPCIIFFDELDSLAPSRGRSGDSGGVMDRVVSQLLAELDGLHSTQDVFVIGATNRPDLLDPALLRPGRFDKLVFVGASEDRASQLRVLSAITRKFKLEASVSLVNVLDRCPPQLTGADLYSLCSDAMTTALKRRVRDLEEGLEMGSSALLLTMEDLLQAAARLQPSVSEQELLRYKRIQRKFAAC.

Residue Arg-119 is modified to Omega-N-methylarginine. Residues 470–477 (GPPGSGKT) and 744–751 (GPPGTGKT) each bind ATP.

Belongs to the AAA ATPase family. In terms of assembly, interacts with PEX1; forming the PEX1-PEX6 AAA ATPase complex, which is composed of a heterohexamer formed by a trimer of PEX1-PEX6 dimers. Interacts with PEX26; interaction is direct and promotes recruitment to peroxisomal membranes. Interacts with ZFAND6.

It is found in the cytoplasm. It localises to the cytosol. The protein localises to the peroxisome membrane. Its subcellular location is the cell projection. The protein resides in the cilium. It is found in the photoreceptor outer segment. The catalysed reaction is ATP + H2O = ADP + phosphate + H(+). Functionally, component of the PEX1-PEX6 AAA ATPase complex, a protein dislocase complex that mediates the ATP-dependent extraction of the PEX5 receptor from peroxisomal membranes, an essential step for PEX5 recycling. Specifically recognizes PEX5 monoubiquitinated at 'Cys-11', and pulls it out of the peroxisome lumen through the PEX2-PEX10-PEX12 retrotranslocation channel. Extraction by the PEX1-PEX6 AAA ATPase complex is accompanied by unfolding of the TPR repeats and release of bound cargo from PEX5. The sequence is that of Peroxisomal ATPase PEX6 from Cricetulus griseus (Chinese hamster).